The following is a 775-amino-acid chain: Endothelin-converting enzyme-like 1 (775 aa).

Residues 1 to 59 lie on the Cytoplasmic side of the membrane; sequence MEPPYSLTAHYDEFQEVKYVSRCGAGGARGASLPPGFPLGAARSATGARSGLPRWNRRE. A helical; Signal-anchor for type II membrane protein membrane pass occupies residues 60–82; that stretch reads VCLLSGLVFAAGLCAILAAMLAL. The Lumenal segment spans residues 83-775; that stretch reads KYLGPVAAGG…MNPAHKCSVW (693 aa). The region spanning 98 to 775 is the Peptidase M13 domain; that stretch reads GCPERKAFAR…MNPAHKCSVW (678 aa). Intrachain disulfides connect cysteine 123–cysteine 760, cysteine 131–cysteine 720, cysteine 187–cysteine 441, and cysteine 649–cysteine 772. N-linked (GlcNAc...) asparagine glycosylation is found at asparagine 255 and asparagine 322. Histidine 612 contributes to the Zn(2+) binding site. Residue glutamate 613 is part of the active site. Histidine 616 provides a ligand contact to Zn(2+). The N-linked (GlcNAc...) asparagine glycan is linked to asparagine 656. Residue glutamate 672 coordinates Zn(2+). The active-site Proton donor is the aspartate 676.

It belongs to the peptidase M13 family. Requires Zn(2+) as cofactor. N-glycosylated. As to expression, highly expressed in the CNS, in particular in putamen, spinal cord, medulla and subthalamic nucleus. A strong signal was also detected in uterine subepithelial cells and around renal blood vessels. Detected at lower levels in amygdala, caudate, thalamus, pancreas and skeletal muscle. Detected at very low levels in substantia nigra, cerebellum, cortex, corpus callosum and hippocampus.

The protein resides in the membrane. May contribute to the degradation of peptide hormones and be involved in the inactivation of neuronal peptides. This is Endothelin-converting enzyme-like 1 (ECEL1) from Homo sapiens (Human).